Consider the following 435-residue polypeptide: Protein lin-54 (435 aa).

A disordered region spans residues 73-136 (DEPIDTSSHR…PASLPRTVQP (64 aa)). A compositionally biased stretch (polar residues) spans 102 to 120 (TPGSSQYTVRNLSNLSGSP). In terms of domain architecture, CRC spans 173–288 (QRKPCNCTKS…KCKGCQNTET (116 aa)). A DNA-binding region spans residues 175–188 (KPCNCTKSQCLKLY). Zn(2+) is bound by residues Cys177, Cys179, Cys184, Cys189, Cys191, Cys198, Cys201, Cys203, and Cys206. Positions 235 to 250 (IGIARGGITDIERLHQ) are linker. Positions 253, 255, 260, 265, 267, 274, 278, 280, and 283 each coordinate Zn(2+). A DNA-binding region spans residues 253-266 (CHCKKSGCLKNYCE). Residues 415–435 (LTQDLDAAPTDDIPGPSTSTS) form a disordered region.

Belongs to the lin-54 family. In terms of assembly, component of the DRM complex, at least composed of lin-9, lin-35, lin-37, lin-52, lin-53, lin-54- dpl-1 and efl-1.

The protein localises to the nucleus. It is found in the chromosome. Functionally, synthetic multivulva class B (synMuvB) protein. SynMuvB proteins are required to repress the induction of vulval development by Ras signaling and probably act by forming the multiprotein DRM complex that repress transcription. The sequence is that of Protein lin-54 from Caenorhabditis elegans.